We begin with the raw amino-acid sequence, 508 residues long: Light-independent protochlorophyllide reductase subunit B (508 aa).

Residue Asp36 coordinates [4Fe-4S] cluster. Catalysis depends on Asp294, which acts as the Proton donor. Residue 429–430 (GM) participates in substrate binding.

This sequence belongs to the ChlB/BchB/BchZ family. As to quaternary structure, protochlorophyllide reductase is composed of three subunits; ChlL, ChlN and ChlB. Forms a heterotetramer of two ChlB and two ChlN subunits. The cofactor is [4Fe-4S] cluster.

It carries out the reaction chlorophyllide a + oxidized 2[4Fe-4S]-[ferredoxin] + 2 ADP + 2 phosphate = protochlorophyllide a + reduced 2[4Fe-4S]-[ferredoxin] + 2 ATP + 2 H2O. Its pathway is porphyrin-containing compound metabolism; chlorophyll biosynthesis (light-independent). Component of the dark-operative protochlorophyllide reductase (DPOR) that uses Mg-ATP and reduced ferredoxin to reduce ring D of protochlorophyllide (Pchlide) to form chlorophyllide a (Chlide). This reaction is light-independent. The NB-protein (ChlN-ChlB) is the catalytic component of the complex. The polypeptide is Light-independent protochlorophyllide reductase subunit B (Synechococcus elongatus (strain ATCC 33912 / PCC 7942 / FACHB-805) (Anacystis nidulans R2)).